The primary structure comprises 183 residues: Large ribosomal subunit protein bL17 (183 aa).

Over residues 130–150 (GTKFAKDEKAKAEATEAKAEE) the composition is skewed to basic and acidic residues. The segment at 130–183 (GTKFAKDEKAKAEATEAKAEETTETTESTEAESTEAPAEEAKAEDTAAEKKDES) is disordered. The span at 151–162 (TTETTESTEAES) shows a compositional bias: acidic residues. Residues 168 to 183 (EEAKAEDTAAEKKDES) show a composition bias toward basic and acidic residues.

It belongs to the bacterial ribosomal protein bL17 family. As to quaternary structure, part of the 50S ribosomal subunit. Contacts protein L32.

In Saccharopolyspora erythraea (strain ATCC 11635 / DSM 40517 / JCM 4748 / NBRC 13426 / NCIMB 8594 / NRRL 2338), this protein is Large ribosomal subunit protein bL17.